The following is a 271-amino-acid chain: 2-dehydro-3-deoxyphosphooctonate aldolase (271 aa).

Belongs to the KdsA family.

It localises to the cytoplasm. It catalyses the reaction D-arabinose 5-phosphate + phosphoenolpyruvate + H2O = 3-deoxy-alpha-D-manno-2-octulosonate-8-phosphate + phosphate. Its pathway is carbohydrate biosynthesis; 3-deoxy-D-manno-octulosonate biosynthesis; 3-deoxy-D-manno-octulosonate from D-ribulose 5-phosphate: step 2/3. It functions in the pathway bacterial outer membrane biogenesis; lipopolysaccharide biosynthesis. This Campylobacter jejuni subsp. jejuni serotype O:2 (strain ATCC 700819 / NCTC 11168) protein is 2-dehydro-3-deoxyphosphooctonate aldolase.